The primary structure comprises 995 residues: Putative pentatricopeptide repeat-containing protein At5g09950 (995 aa).

PPR repeat units lie at residues 35–65 (DVYL…MPLR), 66–100 (NCVS…GIFS), 101–137 (NQYA…SYAV), 138–169 (DAVV…IEVK), 170–204 (NSVS…GSRP), 205–241 (TEYT…GLLT), 242–276 (DLFV…NAVT), 278–303 (NGLM…MNSM), 307–342 (SPES…VITT), 348–378 (MVGI…MTDK), 379–413 (DSVS…DILP), 414–448 (GSFT…GIDL), 449–483 (NVSV…DQVS), 484–515 (WNSI…GQKL), 516–550 (NRIT…NIAD), 551–581 (EATT…MAER), 583–617 (DNVT…GQRL), 618–652 (DSFM…CLES), 653–683 (DVVV…MPVR), 684–718 (NSYS…GQTP), 720–750 (DHVT…MSDS), and 756–786 (RIEH…MPMK). A type E motif region spans residues 791–868 (IWRTVLGACC…EAGYSWVTMK (78 aa)). The segment at 869 to 899 (DGVHMFVAGDKSHPDADVIYKKLKELNRKMR) is type E(+) motif. The interval 900-995 (DAGYVPQTGF…DGACSCSDFW (96 aa)) is type DYW motif.

The protein belongs to the PPR family. PCMP-H subfamily.

This is Putative pentatricopeptide repeat-containing protein At5g09950 (PCMP-H35) from Arabidopsis thaliana (Mouse-ear cress).